The chain runs to 154 residues: Ferredoxin C 1, chloroplastic (154 aa).

The transit peptide at 1–56 directs the protein to the chloroplast; the sequence is MATLPLPTQTSTISLPKPYLSNSFSFPLRNATLSTTTNRRNFLTTGRIIARAYKVV. Positions 57-142 constitute a 2Fe-2S ferredoxin-type domain; sequence VEHDGKTTEL…DCHIKMIPEE (86 aa). Cysteine 89, cysteine 94, cysteine 97, and cysteine 126 together coordinate [2Fe-2S] cluster.

The protein belongs to the 2Fe2S plant-type ferredoxin family. [2Fe-2S] cluster is required as a cofactor.

It localises to the plastid. Its subcellular location is the chloroplast. Its function is as follows. Ferredoxins are iron-sulfur proteins that transfer electrons in a wide variety of metabolic reactions. Mediates alternative electron partitioning in conditions of acceptor limitation at photosystem I. Accepts electrons from photosystem I (PSI) and is capable of electron transfer with FNR, but cannot support photoreduction of NADP(+). The sequence is that of Ferredoxin C 1, chloroplastic from Arabidopsis thaliana (Mouse-ear cress).